We begin with the raw amino-acid sequence, 555 residues long: CTP synthase (555 aa).

The interval M1–L270 is amidoligase domain. CTP is bound at residue S13. UTP is bound at residue S13. ATP contacts are provided by residues S14–I19 and D71. Positions 71 and 144 each coordinate Mg(2+). Residues D151–E153, K191–Q196, and K227 contribute to the CTP site. UTP-binding positions include K191–Q196 and K227. The Glutamine amidotransferase type-1 domain occupies N295 to A547. G356 provides a ligand contact to L-glutamine. The active-site Nucleophile; for glutamine hydrolysis is the C383. L-glutamine contacts are provided by residues L384 to Q387, E407, and R473. Active-site residues include H520 and E522.

The protein belongs to the CTP synthase family. In terms of assembly, homotetramer.

The enzyme catalyses UTP + L-glutamine + ATP + H2O = CTP + L-glutamate + ADP + phosphate + 2 H(+). It carries out the reaction L-glutamine + H2O = L-glutamate + NH4(+). The catalysed reaction is UTP + NH4(+) + ATP = CTP + ADP + phosphate + 2 H(+). Its pathway is pyrimidine metabolism; CTP biosynthesis via de novo pathway; CTP from UDP: step 2/2. Its activity is regulated as follows. Allosterically activated by GTP, when glutamine is the substrate; GTP has no effect on the reaction when ammonia is the substrate. The allosteric effector GTP functions by stabilizing the protein conformation that binds the tetrahedral intermediate(s) formed during glutamine hydrolysis. Inhibited by the product CTP, via allosteric rather than competitive inhibition. Catalyzes the ATP-dependent amination of UTP to CTP with either L-glutamine or ammonia as the source of nitrogen. Regulates intracellular CTP levels through interactions with the four ribonucleotide triphosphates. This chain is CTP synthase, found in Albidiferax ferrireducens (strain ATCC BAA-621 / DSM 15236 / T118) (Rhodoferax ferrireducens).